The following is a 365-amino-acid chain: uncharacterized protein (365 aa).

At 1–133 (MVLAKQWVLK…RKLDKNKVGK (133 aa)) the chain is on the cytoplasmic side. A helical transmembrane segment spans residues 134 to 154 (LWWYLSVLGGTSLTAYFIFFT). The Extracellular segment spans residues 155-169 (YAQLQEREEDYGKVY). Residues 170–190 (LISGAAGAVGTVCIQLALNVF) form a helical membrane-spanning segment. Over 191–365 (KASKVIAIAG…KLITKVNNEE (175 aa)) the chain is Cytoplasmic.

The protein resides in the membrane. This is an uncharacterized protein from Saccharomyces cerevisiae (strain ATCC 204508 / S288c) (Baker's yeast).